Reading from the N-terminus, the 156-residue chain is UPF0178 protein Jann_2168 (156 aa).

This sequence belongs to the UPF0178 family.

This Jannaschia sp. (strain CCS1) protein is UPF0178 protein Jann_2168.